The primary structure comprises 102 residues: MDNQNIRIRLKAYDHRVLDNSTKEIVNTAKRTGARVRGPIPLPTHIERFTVNRSPHVDKKSREQFEIRTHRRLLDIVEPTPQTVDALMKLDLAAGVDVEIKL.

It belongs to the universal ribosomal protein uS10 family. As to quaternary structure, part of the 30S ribosomal subunit.

In terms of biological role, involved in the binding of tRNA to the ribosomes. The polypeptide is Small ribosomal subunit protein uS10 (Gluconobacter oxydans (strain 621H) (Gluconobacter suboxydans)).